The following is a 172-amino-acid chain: MSSSGGAPGASASSAPPAQEEGMTWWYRWLCRLSGVLGAVSCAISGLFNCITIHPLNIAAGVWMIMNAFILLLCEAPFCCQFIEFANTVAEKVDRLRSWQKAVFYCGMAVVPIVISLTLTTLLGNAIAFATGVLYGLSALGKKGDAISYARIQQQRQQADEEKLAETLEGEL.

At 1–32 (MSSSGGAPGASASSAPPAQEEGMTWWYRWLCR) the chain is on the cytoplasmic side. The chain crosses the membrane as a helical span at residues 33–53 (LSGVLGAVSCAISGLFNCITI). Residues 54 to 57 (HPLN) are Extracellular-facing. Residues 58–78 (IAAGVWMIMNAFILLLCEAPF) form a helical membrane-spanning segment. Over 79 to 102 (CCQFIEFANTVAEKVDRLRSWQKA) the chain is Cytoplasmic. Residues 103–123 (VFYCGMAVVPIVISLTLTTLL) traverse the membrane as a helical segment. Residues 124–125 (GN) are Extracellular-facing. Residues 126–142 (AIAFATGVLYGLSALGK) form a helical membrane-spanning segment. The Cytoplasmic segment spans residues 143–172 (KGDAISYARIQQQRQQADEEKLAETLEGEL).

The protein belongs to the calcium channel flower family. In terms of assembly, interacts with adaptor protein complex 2 (AP-2). In terms of tissue distribution, detected in skin cells at low levels of expression (at protein level).

It is found in the cell membrane. The protein localises to the cytoplasmic vesicle. It localises to the secretory vesicle. Its subcellular location is the synaptic vesicle. The protein resides in the golgi apparatus. It is found in the vesicle. The protein localises to the early endosome. It localises to the recycling endosome. Its subcellular location is the endoplasmic reticulum membrane. In terms of biological role, transmembrane protein which mediates synaptic endocytosis and fitness-based cell culling. In response to different stimulus strengths, controls two major modes of synaptic vesicle (SV) retrieval in hippocampal neurons; Clathrin-mediated endocytosis (CME) in response to mild stimulation and activity-dependent bulk endocytosis (ADBE) in response to strong stimulation. In cytotoxic T-lymphoocytes (CTLs) facilitates calcium-dependent endocytosis of cytotoxic granules at the immuno synapse. Different isoforms work as fitness fingerprints in 'loser' and 'winner' cells and thereby mediate win/lose decisions as part of the cell competition process. Functions with the other flower isoforms to produce tissue-specific fitness fingerprints that identify unfit or fit cells during cell selection processes in order to maintain tissue health. During cell competition, if levels of this isoform in cells is higher than in the surrounding neighboring cells, the cells are recognized as 'winner' cells, and do not undergo elimination via apoptosis. Its function is as follows. Functions with the other flower isoforms to produce tissue-specific fitness fingerprints that identify unfit or fit cells during cell selection processes in order to maintain tissue health. During cell competition, if levels of this isoform in unfit cells is higher than in the surrounding neighboring cells, the cells are recognized as 'loser' cells, and undergo elimination via apoptosis to be replaced by the surrounding healthy 'winner' cell population. This Homo sapiens (Human) protein is Calcium channel flower homolog (CACFD1).